The following is a 1127-amino-acid chain: Testis-expressed protein 2 (1127 aa).

2 disordered regions span residues 1 to 27 (MTSL…HVQR) and 133 to 279 (AVSP…SFFK). A compositionally biased stretch (low complexity) spans 133 to 187 (AVSPGSSSSGPLASSPSVSSLSEQKTSSSSPLSSPSKSPILSSSASTSTLSSAKP). Residue Ser196 is modified to Phosphoserine. Residues 249–275 (QFTQPRNTGGDSKTAPSSPLTSPSDTR) show a composition bias toward polar residues. At Thr262 the chain carries Phosphothreonine. Residues Ser265, Ser266, Ser270, and Ser295 each carry the phosphoserine modification. A glycan (N-linked (GlcNAc...) asparagine) is linked at Asn330. Positions 348–386 (EEECDSEGDGYGSDSNIPRSDHPKSTGEPTREIELKSSQ) are disordered. Basic and acidic residues predominate over residues 366-382 (RSDHPKSTGEPTREIEL). 2 helical membrane-spanning segments follow: residues 475 to 495 (TLGF…PHYV) and 497 to 517 (GLFL…WFFT). 4 disordered regions span residues 648–685 (KAQT…QRDQ), 715–764 (KKSS…QKEL), 786–816 (QESR…PPSE), and 947–980 (DEES…GYVG). The segment covering 650 to 670 (QTDKETSEEKPPAEGSEDPKK) has biased composition (basic and acidic residues). Residues Ser732, Ser738, Ser744, Ser748, Ser751, Ser798, and Ser815 each carry the phosphoserine modification. Over residues 735–750 (NSPSGHLTHSRSSSKG) the composition is skewed to polar residues. Polar residues predominate over residues 787 to 804 (ESRSPQRSPLQSAESSPT). The SMP-LTD domain occupies 816 to 1101 (EEEEQEAWVN…MPNMDDVYIT (286 aa)). Positions 947–962 (DEESSSAGSSEEDDAP) are enriched in acidic residues.

It is found in the endoplasmic reticulum membrane. It localises to the nucleus membrane. During endoplasmic reticulum (ER) stress or when cellular ceramide levels increase, may induce contacts between the ER and medial-Golgi complex to facilitate non-vesicular transport of ceramides from the ER to the Golgi complex where they are converted to complex sphingolipids, preventing toxic ceramide accumulation. The polypeptide is Testis-expressed protein 2 (TEX2) (Homo sapiens (Human)).